A 575-amino-acid chain; its full sequence is NEDD4-binding protein 2-like 2 (575 aa).

Basic and acidic residues-rich tracts occupy residues 69-87 (QEDKTSTDVLKPLHKEMPG), 129-142 (PPEKKKCRERKSET), and 149-167 (DSKRRQEEKQKSNSKKLEM). Disordered stretches follow at residues 69–169 (QEDK…EMDT) and 555–575 (GEQRWGGSLGSHSQVSIADDY). Positions 162-194 (SKKLEMDTELSQFYKEIEELENENEASQGSCTE) form a coiled coil. Residues 564–575 (GSHSQVSIADDY) show a composition bias toward polar residues.

This is NEDD4-binding protein 2-like 2 (N4bp2l2) from Mus musculus (Mouse).